The primary structure comprises 314 residues: E3 ubiquitin-protein ligase SINA-like 11 (314 aa).

A compositionally biased stretch (polar residues) spans 1–12; that stretch reads MEDSNSHPQNQT. The tract at residues 1-31 is disordered; it reads MEDSNSHPQNQTSKRKSSHPQKKQRMENETR. A compositionally biased stretch (basic residues) spans 13–23; it reads SKRKSSHPQKK. Residues 43–81 form an RING-type; degenerate zinc finger; that stretch reads CPVCFEPLTIPTFQCDDGHIVCNFCFAKVSNKCPGPGCD. An SBD region spans residues 95–280; sequence VLESAFVPCQ…PANEVQQVTI (186 aa). The SIAH-type zinc-finger motif lies at 98-156; sequence SAFVPCQNTEFGCTKSVSYEKVSSHEKECNYSQCSCPNLECNYTGSYNIIYGHFMRRHL. C103, C110, H122, C126, C133, C138, H150, and H155 together coordinate Zn(2+).

The protein belongs to the SINA (Seven in absentia) family.

It catalyses the reaction S-ubiquitinyl-[E2 ubiquitin-conjugating enzyme]-L-cysteine + [acceptor protein]-L-lysine = [E2 ubiquitin-conjugating enzyme]-L-cysteine + N(6)-ubiquitinyl-[acceptor protein]-L-lysine.. It functions in the pathway protein modification; protein ubiquitination. Functionally, E3 ubiquitin-protein ligase that mediates ubiquitination and subsequent proteasomal degradation of target proteins. E3 ubiquitin ligases accept ubiquitin from an E2 ubiquitin-conjugating enzyme in the form of a thioester and then directly transfers the ubiquitin to targeted substrates. It probably triggers the ubiquitin-mediated degradation of different substrates. This Arabidopsis thaliana (Mouse-ear cress) protein is E3 ubiquitin-protein ligase SINA-like 11.